A 528-amino-acid chain; its full sequence is Transcriptional activator protein UGA3 (528 aa).

Positions 17–44 (CITCKIRKKRCSEDKPVCRDCRRLSFPC) form a DNA-binding region, zn(2)-C6 fungal-type. Positions 55–62 (SLKKIKAD) match the Nuclear localization signal motif.

In terms of assembly, UGA3 proteins associate in oligomers, at least in the presence of inducer.

Its subcellular location is the nucleus. Functionally, GABA-dependent positive regulation of genes required for catabolism of GABA (UGA4, UGA1, and UGA2). The protein is Transcriptional activator protein UGA3 (UGA3) of Saccharomyces cerevisiae (strain ATCC 204508 / S288c) (Baker's yeast).